The following is a 269-amino-acid chain: Homocitrate synthase subunit alpha (269 aa).

Residues 3-255 (INIVDTTLRD…IYTGDFEDII (253 aa)) enclose the Pyruvate carboxyltransferase domain.

Belongs to the alpha-IPM synthase/homocitrate synthase family. In terms of assembly, heterodimer of an alpha and an omega chain.

It carries out the reaction acetyl-CoA + 2-oxoglutarate + H2O = (2R)-homocitrate + CoA + H(+). Functionally, this protein is a Fe-Mo-cofactor biosynthetic component. This Clostridium pasteurianum protein is Homocitrate synthase subunit alpha (nifV-ALPHA).